The following is a 310-amino-acid chain: Transcription factor UNE12 (310 aa).

Disordered stretches follow at residues 124–156 (HGQP…ATDP) and 229–253 (SSSV…WSND). Residues 152 to 201 (QATDPHSIAERLRRERIAERIRALQELVPTVNKTDRAAMIDEIVDYVKFL) enclose the bHLH domain.

In terms of assembly, homodimer. In terms of tissue distribution, expressed constitutively in roots, leaves, stems, and flowers.

It is found in the nucleus. Its function is as follows. Required for ovule fertilization. The protein is Transcription factor UNE12 (UNE12) of Arabidopsis thaliana (Mouse-ear cress).